We begin with the raw amino-acid sequence, 642 residues long: Threonine--tRNA ligase (642 aa).

A TGS domain is found at 1 to 61; sequence MPVITLPDGS…DADATVAIIT (61 aa). Residues 243 to 534 are catalytic; that stretch reads DHRKIGKQLD…LTEEFAGFFP (292 aa). 3 residues coordinate Zn(2+): cysteine 334, histidine 385, and histidine 511.

Belongs to the class-II aminoacyl-tRNA synthetase family. As to quaternary structure, homodimer. It depends on Zn(2+) as a cofactor.

It localises to the cytoplasm. The catalysed reaction is tRNA(Thr) + L-threonine + ATP = L-threonyl-tRNA(Thr) + AMP + diphosphate + H(+). Functionally, catalyzes the attachment of threonine to tRNA(Thr) in a two-step reaction: L-threonine is first activated by ATP to form Thr-AMP and then transferred to the acceptor end of tRNA(Thr). Also edits incorrectly charged L-seryl-tRNA(Thr). This is Threonine--tRNA ligase from Edwardsiella ictaluri (strain 93-146).